The primary structure comprises 129 residues: Small ribosomal subunit protein uS11 (129 aa).

This sequence belongs to the universal ribosomal protein uS11 family. In terms of assembly, part of the 30S ribosomal subunit. Interacts with proteins S7 and S18. Binds to IF-3.

Functionally, located on the platform of the 30S subunit, it bridges several disparate RNA helices of the 16S rRNA. Forms part of the Shine-Dalgarno cleft in the 70S ribosome. This chain is Small ribosomal subunit protein uS11, found in Yersinia pseudotuberculosis serotype O:1b (strain IP 31758).